The sequence spans 122 residues: RxLR effector protein Avh52 (122 aa).

The first 21 residues, 1-21, serve as a signal peptide directing secretion; it reads MRLTSILVLVIAATFHTTGTA. The short motif at 50–68 is the RxLR-dEER element; that stretch reads RLLRRVEKDKVDYEQDEQR. Residues 69–86 form a TAP1-binding region; the sequence is SFGALKDAVKKLNPVTAV. A nuclear localization signal (NLS) region spans residues 87–98; sequence KKFFKQRAKRKK.

Belongs to the RxLR effector family. As to quaternary structure, interacts with host acetyl transferase TAP1.

The protein localises to the secreted. It is found in the host nucleus. Functionally, effector that suppresses plant defense responses during the early stages of pathogen infection. Suppresses cell death induced by effectors and PAMPs in plant hosts. Interacts with host acetyltransferase TAP1 and causes TAP1 relocation into the nucleus where it acetylates histones H2A and H3 during early infection, thereby promoting susceptibility of host plant to P.sojae. This is RxLR effector protein Avh52 from Phytophthora sojae (strain P6497) (Soybean stem and root rot agent).